The chain runs to 160 residues: Transcription antitermination protein NusB (160 aa).

This sequence belongs to the NusB family.

Involved in transcription antitermination. Required for transcription of ribosomal RNA (rRNA) genes. Binds specifically to the boxA antiterminator sequence of the ribosomal RNA (rrn) operons. The sequence is that of Transcription antitermination protein NusB from Rhizobium rhizogenes (strain K84 / ATCC BAA-868) (Agrobacterium radiobacter).